Reading from the N-terminus, the 125-residue chain is DNA-directed RNA polymerases I and III subunit RPAC2 (125 aa).

Belongs to the archaeal Rpo11/eukaryotic RPB11/RPC19 RNA polymerase subunit family. As to quaternary structure, component of the RNA polymerase I (Pol I) and RNA polymerase III (Pol III) complexes consisting of 14 and 17 subunits, respectively.

It is found in the nucleus. Its function is as follows. DNA-dependent RNA polymerase catalyzes the transcription of DNA into RNA using the four ribonucleoside triphosphates as substrates. Common core component of RNA polymerases I and III which synthesize ribosomal RNA precursors and small RNAs, such as 5S rRNA and tRNAs, respectively. This is DNA-directed RNA polymerases I and III subunit RPAC2 (rpc19) from Schizosaccharomyces pombe (strain 972 / ATCC 24843) (Fission yeast).